The sequence spans 226 residues: Leucyl/phenylalanyl-tRNA--protein transferase (226 aa).

This sequence belongs to the L/F-transferase family.

Its subcellular location is the cytoplasm. It catalyses the reaction N-terminal L-lysyl-[protein] + L-leucyl-tRNA(Leu) = N-terminal L-leucyl-L-lysyl-[protein] + tRNA(Leu) + H(+). It carries out the reaction N-terminal L-arginyl-[protein] + L-leucyl-tRNA(Leu) = N-terminal L-leucyl-L-arginyl-[protein] + tRNA(Leu) + H(+). The enzyme catalyses L-phenylalanyl-tRNA(Phe) + an N-terminal L-alpha-aminoacyl-[protein] = an N-terminal L-phenylalanyl-L-alpha-aminoacyl-[protein] + tRNA(Phe). Functions in the N-end rule pathway of protein degradation where it conjugates Leu, Phe and, less efficiently, Met from aminoacyl-tRNAs to the N-termini of proteins containing an N-terminal arginine or lysine. The chain is Leucyl/phenylalanyl-tRNA--protein transferase from Pseudomonas aeruginosa (strain LESB58).